The chain runs to 791 residues: Genome polyprotein (791 aa).

The interval 1–15 is interaction with host EXOC1; the sequence is MNNQRKKTGRPSFNM. Residues 1–101 lie on the Cytoplasmic side of the membrane; the sequence is MNNQRKKTGR…LNIMNRRKRS (101 aa). Positions 37 to 72 are hydrophobic; homodimerization of capsid protein C; that stretch reads LLSGQGPMKLVMAFIAFLRFLAIPPTAGILARWSSF. Positions 101–114 are cleaved as a propeptide — ER anchor for the capsid protein C, removed in mature form by serine protease NS3; sequence SVTMLLMLLPTALA. A helical membrane pass occupies residues 102-119; the sequence is VTMLLMLLPTALAFHLTT. Over 120–242 the chain is Extracellular; the sequence is RGGEPTLIVS…QIQKVETWAL (123 aa). N-linked (GlcNAc...) asparagine; by host glycosylation is present at Asn-183. Residues 243–260 form a helical membrane-spanning segment; the sequence is RHPGFTVIGLFLAHAIGT. Position 261 (Ser-261) is a topological domain, cytoplasmic. The helical transmembrane segment at 262–280 threads the bilayer; it reads ITQKGIIFILLMLVTPSMA. Topologically, residues 281–725 are extracellular; the sequence is MRCVGIGNRD…IHQIFGTAYG (445 aa). 4 disulfides stabilise this stretch: Cys-283/Cys-310, Cys-340/Cys-401, Cys-354/Cys-385, and Cys-372/Cys-396. Asn-347 carries an N-linked (GlcNAc...) asparagine; by host glycan. The fusion peptide stretch occupies residues 378–391; it reads DRGWGNGCGLFGKG. A glycan (N-linked (GlcNAc...) asparagine; by host) is linked at Asn-433. Intrachain disulfides connect Cys-465–Cys-565 and Cys-582–Cys-613. A helical membrane pass occupies residues 726–746; it reads ILFSGVSWTMKIGIGILLTWL. The Cytoplasmic segment spans residues 747–752; that stretch reads GLNSRS. Residues 753–775 traverse the membrane as a helical segment; that stretch reads TSLSMTCIAVGMVTLYLGVMVQA. Over 776-791 the chain is Extracellular; sequence DSGCVINWKGKELKCG. Cys-779 and Cys-790 form a disulfide bridge.

As to quaternary structure, homodimer. Interacts (via N-terminus) with host EXOC1 (via C-terminus); this interaction results in EXOC1 degradation through the proteasome degradation pathway. Forms heterodimers with envelope protein E in the endoplasmic reticulum and Golgi. In terms of assembly, homodimer; in the endoplasmic reticulum and Golgi. Interacts with protein prM. Interacts with non-structural protein 1. As to quaternary structure, homodimer; Homohexamer when secreted. Interacts with envelope protein E. Specific enzymatic cleavages in vivo yield mature proteins. Cleavages in the lumen of endoplasmic reticulum are performed by host signal peptidase, wereas cleavages in the cytoplasmic side are performed by serine protease NS3. Signal cleavage at the 2K-4B site requires a prior NS3 protease-mediated cleavage at the 4A-2K site. Post-translationally, N-glycosylated. In terms of processing, N-glycosylated. The excreted form is glycosylated and this is required for efficient secretion of the protein from infected cells.

The protein resides in the virion. Its subcellular location is the host nucleus. It localises to the host cytoplasm. The protein localises to the host perinuclear region. It is found in the secreted. The protein resides in the virion membrane. Its subcellular location is the host endoplasmic reticulum membrane. Functionally, plays a role in virus budding by binding to the cell membrane and gathering the viral RNA into a nucleocapsid that forms the core of a mature virus particle. During virus entry, may induce genome penetration into the host cytoplasm after hemifusion induced by the surface proteins. Can migrate to the cell nucleus where it modulates host functions. Overcomes the anti-viral effects of host EXOC1 by sequestering and degrading the latter through the proteasome degradation pathway. Inhibits RNA silencing by interfering with host Dicer. Its function is as follows. Prevents premature fusion activity of envelope proteins in trans-Golgi by binding to envelope protein E at pH6.0. After virion release in extracellular space, gets dissociated from E dimers. In terms of biological role, acts as a chaperone for envelope protein E during intracellular virion assembly by masking and inactivating envelope protein E fusion peptide. prM is the only viral peptide matured by host furin in the trans-Golgi network probably to avoid catastrophic activation of the viral fusion activity in acidic GolGi compartment prior to virion release. prM-E cleavage is inefficient, and many virions are only partially matured. These uncleaved prM would play a role in immune evasion. Functionally, may play a role in virus budding. Exerts cytotoxic effects by activating a mitochondrial apoptotic pathway through M ectodomain. May display a viroporin activity. Binds to host cell surface receptor and mediates fusion between viral and cellular membranes. Envelope protein is synthesized in the endoplasmic reticulum in the form of heterodimer with protein prM. They play a role in virion budding in the ER, and the newly formed immature particle is covered with 60 spikes composed of heterodimer between precursor prM and envelope protein E. The virion is transported to the Golgi apparatus where the low pH causes dissociation of PrM-E heterodimers and formation of E homodimers. prM-E cleavage is inefficient, and many virions are only partially matured. These uncleaved prM would play a role in immune evasion. Its function is as follows. Involved in immune evasion, pathogenesis and viral replication. Once cleaved off the polyprotein, is targeted to three destinations: the viral replication cycle, the plasma membrane and the extracellular compartment. Essential for viral replication. Required for formation of the replication complex and recruitment of other non-structural proteins to the ER-derived membrane structures. Excreted as a hexameric lipoparticle that plays a role against host immune response. Antagonizing the complement function. Binds to the host macrophages and dendritic cells. Inhibits signal transduction originating from Toll-like receptor 3 (TLR3). In terms of biological role, disrupts the host endothelial glycocalyx layer of host pulmonary microvascular endothelial cells, inducing degradation of sialic acid and shedding of heparan sulfate proteoglycans. NS1 induces expression of sialidases, heparanase, and activates cathepsin L, which activates heparanase via enzymatic cleavage. These effects are probably linked to the endothelial hyperpermeability observed in severe dengue disease. This chain is Genome polyprotein, found in Dengue virus type 1 (strain Jamaica/CV1636/1977) (DENV-1).